A 98-amino-acid chain; its full sequence is NADH-ubiquinone oxidoreductase chain 4L (98 aa).

3 helical membrane-spanning segments follow: residues 1–21, 30–50, and 61–81; these read MSMV…GLLI, LLCL…TILT, and IILL…LVMI.

Belongs to the complex I subunit 4L family. In terms of assembly, core subunit of respiratory chain NADH dehydrogenase (Complex I) which is composed of 45 different subunits.

The protein resides in the mitochondrion inner membrane. It catalyses the reaction a ubiquinone + NADH + 5 H(+)(in) = a ubiquinol + NAD(+) + 4 H(+)(out). Functionally, core subunit of the mitochondrial membrane respiratory chain NADH dehydrogenase (Complex I) which catalyzes electron transfer from NADH through the respiratory chain, using ubiquinone as an electron acceptor. Part of the enzyme membrane arm which is embedded in the lipid bilayer and involved in proton translocation. This Gulo gulo (Wolverine) protein is NADH-ubiquinone oxidoreductase chain 4L (MT-ND4L).